We begin with the raw amino-acid sequence, 77 residues long: uncharacterized protein (77 aa).

This is an uncharacterized protein from Escherichia coli (strain K12).